A 90-amino-acid chain; its full sequence is Translation initiation factor IF-1 (90 aa).

In terms of domain architecture, S1-like spans Lys-15–Lys-90.

The protein belongs to the IF-1 family. Component of the 30S ribosomal translation pre-initiation complex which assembles on the 30S ribosome in the order IF-2 and IF-3, IF-1 and N-formylmethionyl-tRNA(fMet); mRNA recruitment can occur at any time during PIC assembly.

It is found in the cytoplasm. Functionally, one of the essential components for the initiation of protein synthesis. Stabilizes the binding of IF-2 and IF-3 on the 30S subunit to which N-formylmethionyl-tRNA(fMet) subsequently binds. Helps modulate mRNA selection, yielding the 30S pre-initiation complex (PIC). Upon addition of the 50S ribosomal subunit IF-1, IF-2 and IF-3 are released leaving the mature 70S translation initiation complex. In Mycoplasma sp, this protein is Translation initiation factor IF-1.